Here is a 1519-residue protein sequence, read N- to C-terminus: Dicer-like protein 1 (1519 aa).

Polar residues predominate over residues 1–13 (MTHQNTETASLAT). Residues 1–62 (MTHQNTETAS…KDPSQRQRQQ (62 aa)) form a disordered region. The segment covering 39-48 (SDESEGSEEE) has biased composition (acidic residues). One can recognise a Helicase ATP-binding domain in the interval 116-297 (LFERAKVQNT…EAARNLEALL (182 aa)). ATP is bound at residue 129–136 (LDTGSGKT). The DEAH box motif lies at 242–245 (DEAH). The region spanning 431–601 (ALSSKVRVLW…QLLPEDRILH (171 aa)) is the Helicase C-terminal domain. A Dicer dsRNA-binding fold domain is found at 634-724 (AITVLARYAS…NSVYHRRLPA (91 aa)). The 120-residue stretch at 882–1001 (DDIEYQADMP…ICIEPLKISA (120 aa)) folds into the PAZ domain. RNase III domains follow at residues 1026–1184 (GLEA…LTPG) and 1235–1387 (CRRV…VDSN). Mg(2+) is bound by residues Glu1275, Asp1373, and Glu1376. In terms of domain architecture, DRBM spans 1421–1489 (TFLHNKLTNE…SENALTELLH (69 aa)). Positions 1433, 1460, 1501, and 1503 each coordinate Zn(2+).

This sequence belongs to the helicase family. Dicer subfamily. The cofactor is Mg(2+). Mn(2+) serves as cofactor.

Its function is as follows. Dicer-like endonuclease involved in cleaving double-stranded RNA in the RNA interference (RNAi) pathway. Produces 21 to 25 bp dsRNAs (siRNAs) which target the selective destruction of homologous RNAs leading to sequence-specific suppression of gene expression, called post-transcriptional gene silencing (PTGS). Part of a broad host defense response against viral infection and transposons. This Aspergillus terreus (strain NIH 2624 / FGSC A1156) protein is Dicer-like protein 1 (dcl1).